A 163-amino-acid polypeptide reads, in one-letter code: Lipoprotein signal peptidase (163 aa).

The next 3 helical transmembrane spans lie at 11 to 31 (ILIA…IATT), 63 to 83 (KMTF…YFFI), and 88 to 108 (YNLF…GNFI). Active-site residues include D118 and D136. A helical transmembrane segment spans residues 131–151 (IFNIADSSLTIGVILIIIALL).

It belongs to the peptidase A8 family.

The protein localises to the cell membrane. It catalyses the reaction Release of signal peptides from bacterial membrane prolipoproteins. Hydrolyzes -Xaa-Yaa-Zaa-|-(S,diacylglyceryl)Cys-, in which Xaa is hydrophobic (preferably Leu), and Yaa (Ala or Ser) and Zaa (Gly or Ala) have small, neutral side chains.. Its pathway is protein modification; lipoprotein biosynthesis (signal peptide cleavage). Functionally, this protein specifically catalyzes the removal of signal peptides from prolipoproteins. This chain is Lipoprotein signal peptidase, found in Staphylococcus aureus (strain MRSA252).